The chain runs to 506 residues: Protein NEN3 (506 aa).

The region spanning 15–176 is the Exonuclease domain; that stretch reads FFDLETAVPT…LDDVRMNLEV (162 aa). 2 residues coordinate Mg(2+): D17 and E19. H164 serves as the catalytic Proton donor/acceptor. Residue D169 coordinates Mg(2+). 2 disordered regions span residues 204–240 and 289–313; these read KSPRTRSNGKLVANGVRESSTSSSSSPKTDPSSSSVD and AEEAKTVRQQDESPPSPDSDAKDES. The segment covering 222 to 238 has biased composition (low complexity); it reads SSTSSSSSPKTDPSSSS. Over residues 290–299 the composition is skewed to basic and acidic residues; sequence EEAKTVRQQD.

It depends on Mg(2+) as a cofactor.

Functionally, probable exonuclease that may be involved in enuclation of sieve elements. In Arabidopsis thaliana (Mouse-ear cress), this protein is Protein NEN3 (NEN3).